A 461-amino-acid chain; its full sequence is Bifunctional protein GlmU (461 aa).

The interval 1–230 (MECLMAVILA…SSEILGINDR (230 aa)) is pyrophosphorylase. Residues 9 to 12 (LAAG), Lys-23, Gln-73, 78 to 79 (GT), 101 to 103 (YGD), Gly-140, Glu-155, Asn-170, and Asn-228 each bind UDP-N-acetyl-alpha-D-glucosamine. Asp-103 lines the Mg(2+) pocket. Mg(2+) is bound at residue Asn-228. A linker region spans residues 231-251 (VQLAEAGRIIRSRILKRHMKN). Residues 252 to 461 (GVTIIDPDST…KKGMLRQEKE (210 aa)) are N-acetyltransferase. 2 residues coordinate UDP-N-acetyl-alpha-D-glucosamine: Arg-333 and Lys-351. His-363 acts as the Proton acceptor in catalysis. UDP-N-acetyl-alpha-D-glucosamine-binding residues include Tyr-366 and Asn-377. Acetyl-CoA-binding positions include 386–387 (NY), Ala-423, and Arg-440.

In the N-terminal section; belongs to the N-acetylglucosamine-1-phosphate uridyltransferase family. This sequence in the C-terminal section; belongs to the transferase hexapeptide repeat family. In terms of assembly, homotrimer. Mg(2+) serves as cofactor.

The protein localises to the cytoplasm. It catalyses the reaction alpha-D-glucosamine 1-phosphate + acetyl-CoA = N-acetyl-alpha-D-glucosamine 1-phosphate + CoA + H(+). It carries out the reaction N-acetyl-alpha-D-glucosamine 1-phosphate + UTP + H(+) = UDP-N-acetyl-alpha-D-glucosamine + diphosphate. Its pathway is nucleotide-sugar biosynthesis; UDP-N-acetyl-alpha-D-glucosamine biosynthesis; N-acetyl-alpha-D-glucosamine 1-phosphate from alpha-D-glucosamine 6-phosphate (route II): step 2/2. It participates in nucleotide-sugar biosynthesis; UDP-N-acetyl-alpha-D-glucosamine biosynthesis; UDP-N-acetyl-alpha-D-glucosamine from N-acetyl-alpha-D-glucosamine 1-phosphate: step 1/1. The protein operates within bacterial outer membrane biogenesis; LPS lipid A biosynthesis. Its function is as follows. Catalyzes the last two sequential reactions in the de novo biosynthetic pathway for UDP-N-acetylglucosamine (UDP-GlcNAc). The C-terminal domain catalyzes the transfer of acetyl group from acetyl coenzyme A to glucosamine-1-phosphate (GlcN-1-P) to produce N-acetylglucosamine-1-phosphate (GlcNAc-1-P), which is converted into UDP-GlcNAc by the transfer of uridine 5-monophosphate (from uridine 5-triphosphate), a reaction catalyzed by the N-terminal domain. The protein is Bifunctional protein GlmU of Acetivibrio thermocellus (strain ATCC 27405 / DSM 1237 / JCM 9322 / NBRC 103400 / NCIMB 10682 / NRRL B-4536 / VPI 7372) (Clostridium thermocellum).